The sequence spans 389 residues: MAASAAETRVFLEVRGQLQSALLILGEPKEGGMPMNISIMPSSLQMKTPEGCTEIQLPAEVRLVPSSCRGLQFVVGDGLHLRLQTQAKLGTKLISMFNQSSQTQECCTFYCQSCGEVIIKDRKLLRVLPLPSENWGALVGEWCCHPDPFANKSLHPQENDCFIGDSFFLVNLRTSLWQQRPELSPVEMCCVSSDNHCKLEPKANTKVICKRCKVMLGETVSSETTKFYMTEIIIQSSERSFPIIPRSWFVQSVIAQCLVQLSSARSTFRFTIQGQDDKVYILLWLLNSDSLVIESLRNSKYIKKFPLLENTFKADSSSAWSAVKVLYQPCIKSRNEKLVSLWESDISVHPLTLPSATCLELLLILSKSNANLPSSLRRVNSFQVAFLKM.

Residue A2 is modified to N-acetylalanine. The BRAT1-like motif motif lies at 129–159 (PLPSENWGALVGEWCCHPDPFANKSLHPQEN). Residue C144 coordinates Zn(2+). Positions 235–257 (QSSERSFPIIPRSWFVQSVIAQC) are interaction with UBE2C. The HECT-like stretch occupies residues 353-389 (LPSATCLELLLILSKSNANLPSSLRRVNSFQVAFLKM).

Interacts with UBE2C/UbcH10 (E2 ubiquitin-conjugating enzyme). In vitro, interacts with cyclin-B. In terms of processing, ubiquitinated by UBCH10 (E2 ubiquitin-conjugating enzyme).

It is found in the cytoplasm. It carries out the reaction S-ubiquitinyl-[E2 ubiquitin-conjugating enzyme]-L-cysteine + [acceptor protein]-L-lysine = [E2 ubiquitin-conjugating enzyme]-L-cysteine + N(6)-ubiquitinyl-[acceptor protein]-L-lysine.. The protein operates within protein modification; protein ubiquitination. In terms of biological role, E3 ubiquitin-protein ligase which accepts ubiquitin from specific E2 ubiquitin-conjugating enzymes, and transfers it to substrates, generally promoting their degradation by the proteasome. Independently of its E3 ubiquitin-protein ligase activity, acts as an inhibitor of CPSF3 endonuclease activity by blocking CPSF3 active site. The polypeptide is E3 ubiquitin-protein ligase E3D (UBE3D) (Homo sapiens (Human)).